Reading from the N-terminus, the 431-residue chain is Dihydroorotase (431 aa).

2 residues coordinate Zn(2+): His-59 and His-61. Residues 61–63 (HLR) and Asn-93 each bind substrate. Residues Asp-151, His-178, His-231, and Asp-304 each contribute to the Zn(2+) site. Asp-304 is a catalytic residue. Substrate contacts are provided by residues His-308 and 322 to 323 (FG).

The protein belongs to the metallo-dependent hydrolases superfamily. DHOase family. Class I DHOase subfamily. The cofactor is Zn(2+).

The enzyme catalyses (S)-dihydroorotate + H2O = N-carbamoyl-L-aspartate + H(+). The protein operates within pyrimidine metabolism; UMP biosynthesis via de novo pathway; (S)-dihydroorotate from bicarbonate: step 3/3. Catalyzes the reversible cyclization of carbamoyl aspartate to dihydroorotate. The polypeptide is Dihydroorotase (Thermoanaerobacter sp. (strain X514)).